Consider the following 974-residue polypeptide: Villin-4 (974 aa).

6 Gelsolin-like repeats span residues 29–79 (FIPT…DEAG), 150–190 (VHVK…QERA), 262–305 (GQAN…DDRK), 394–451 (LQVW…EERG), 532–572 (MQAI…TDQE), and 634–675 (LKVT…KNKL). The disordered stretch occupies residues 738-783 (VKNGGTPVADKPKRRTPASYGGRASVPDKSQQRSRSMSFSPDRVRV). Residues S777 and S787 each carry the phosphoserine modification. Disordered regions lie at residues 801-833 (NARNLSTPPPVVRKLYPRSVTPDSSKFAPAPKS) and 845-930 (KIPP…PVSD). A compositionally biased stretch (low complexity) spans 824 to 833 (SSKFAPAPKS). A compositionally biased stretch (basic and acidic residues) spans 872 to 887 (NSKEQEEKKENDKEEG). A compositionally biased stretch (polar residues) spans 888-898 (SMSSRIESLTI). A Phosphoserine modification is found at S890. The 66-residue stretch at 909-974 (EEDLPAHPYD…NKFKMAVQLF (66 aa)) folds into the HP domain. The segment covering 912–921 (LPAHPYDRLK) has biased composition (basic and acidic residues).

Belongs to the villin/gelsolin family. As to expression, preferentially expressed in vegetative tissues. Detected in the whole seedling, hypocotyl, cotyledon, primary root, roots hair cells and trichomes. Expressed in flowers but not in the silique.

Its subcellular location is the cytoplasm. The protein localises to the cytoskeleton. Its function is as follows. Binds actin and actin filament bundles in a Ca(2+)-insensitive manner, but caps the barbed end of actin filaments and is able to sever them in a calcium-dependent manner. Involved in root hair growth through regulating actin organization in a Ca(2+)-dependent manner. This is Villin-4 from Arabidopsis thaliana (Mouse-ear cress).